The primary structure comprises 469 residues: MAEFPFEISPMFEGERVRKEGMFVELGGPKSLGLELVRAADMDAIEDDKVTIVGPDLKDMEEGKTYPWAMIFNIGGELVEPDLESVVERRVHDFINYCQGIMHLNQRYDVWMRVSKDTAGKMDSFEPFGKAVMMLFKTELPFIEKMQVTFYTGKEEVEKQMELAKEIFKARDARTKDLHDEDVDVFYGCTLCQSFAPTNVCVVSPDRISLCGAINWFDGRAAAKVDPEGPQFEIAKGDLLDAVTGEYTGVNEIAKKLSSGEFDKIKLHSFFDSPHTSCGCFEVVGFYIPEVDGIGWVDREYQGMAPNGIGFSTMAGQTGGGKQIVGFLGIGVNYFYSPKFIQADGGWNRVVWLPSGLKAKIDEAIPADLKDKIATENDATDIASLKDFLEAKNHPVVATWAAAEEEEEEEEEEEEVAVAAAPMMMPAAGFQMPAMPMMSGGSGGGIKLTFKNAKITIDKLVISEKKEKK.

The [Ni-Fe-S] cluster site is built by cysteine 189, cysteine 192, cysteine 278, and cysteine 280.

This sequence belongs to the CdhC family. As to quaternary structure, monomer. The ACDS complex is made up of alpha, epsilon, beta, gamma and delta chains with a probable stoichiometry of (alpha(2)epsilon(2))(4)-beta(8)-(gamma(1)delta(1))(8) (Potential). [Ni-Fe-S] cluster is required as a cofactor.

It carries out the reaction Co(I)-[corrinoid Fe-S protein] + acetyl-CoA + H(+) = methyl-Co(III)-[corrinoid Fe-S protein] + CO + CoA. It functions in the pathway one-carbon metabolism; methanogenesis from acetate. Part of a complex that catalyzes the reversible cleavage of acetyl-CoA, allowing growth on acetate as sole source of carbon and energy. The alpha-epsilon complex generates CO from CO(2), while the beta subunit (this protein) combines the CO with CoA and a methyl group to form acetyl-CoA. The methyl group, which is incorporated into acetyl-CoA, is transferred to the beta subunit by a corrinoid iron-sulfur protein (the gamma-delta complex). In Methanosarcina thermophila, this protein is Acetyl-CoA decarbonylase/synthase complex subunit beta 1 (cdhC1).